Reading from the N-terminus, the 79-residue chain is Sulfur carrier protein TusA (79 aa).

The active-site Cysteine persulfide intermediate is the Cys-17.

It belongs to the sulfur carrier protein TusA family.

Its subcellular location is the cytoplasm. In terms of biological role, sulfur carrier protein which probably makes part of a sulfur-relay system. The sequence is that of Sulfur carrier protein TusA from Haemophilus influenzae (strain 86-028NP).